We begin with the raw amino-acid sequence, 408 residues long: tRNA pseudouridine synthase D (408 aa).

Aspartate 82 acts as the Nucleophile in catalysis. The region spanning 157–367 (GVPNRFGEQR…MEGERRPLRV (211 aa)) is the TRUD domain.

This sequence belongs to the pseudouridine synthase TruD family.

The catalysed reaction is uridine(13) in tRNA = pseudouridine(13) in tRNA. Responsible for synthesis of pseudouridine from uracil-13 in transfer RNAs. The polypeptide is tRNA pseudouridine synthase D (Geobacter sulfurreducens (strain ATCC 51573 / DSM 12127 / PCA)).